Here is a 319-residue protein sequence, read N- to C-terminus: Thioredoxin reductase (319 aa).

Position 36–48 (36–48 (EGFMAGGVAAGGQ)) interacts with FAD. Cys-144 and Cys-147 are disulfide-bonded. 289–298 (DVQDKVYRQA) lines the FAD pocket.

Belongs to the class-II pyridine nucleotide-disulfide oxidoreductase family. As to quaternary structure, homodimer. FAD serves as cofactor.

It catalyses the reaction [thioredoxin]-dithiol + NADP(+) = [thioredoxin]-disulfide + NADPH + H(+). In Dictyostelium discoideum (Social amoeba), this protein is Thioredoxin reductase (trrA).